Consider the following 323-residue polypeptide: o-succinylbenzoate synthase (323 aa).

The active-site Proton donor is K134. Mg(2+)-binding residues include D162, E191, and D214. The Proton acceptor role is filled by K236.

This sequence belongs to the mandelate racemase/muconate lactonizing enzyme family. MenC type 1 subfamily. A divalent metal cation is required as a cofactor.

The catalysed reaction is (1R,6R)-6-hydroxy-2-succinyl-cyclohexa-2,4-diene-1-carboxylate = 2-succinylbenzoate + H2O. It participates in quinol/quinone metabolism; 1,4-dihydroxy-2-naphthoate biosynthesis; 1,4-dihydroxy-2-naphthoate from chorismate: step 4/7. It functions in the pathway quinol/quinone metabolism; menaquinone biosynthesis. Its function is as follows. Converts 2-succinyl-6-hydroxy-2,4-cyclohexadiene-1-carboxylate (SHCHC) to 2-succinylbenzoate (OSB). The chain is o-succinylbenzoate synthase from Yersinia enterocolitica serotype O:8 / biotype 1B (strain NCTC 13174 / 8081).